We begin with the raw amino-acid sequence, 340 residues long: UPF0324 membrane protein BA_5405/GBAA_5405/BAS5024 (340 aa).

The next 10 membrane-spanning stretches (helical) occupy residues 13–35 (FGFS…LAEL), 40–59 (IMGQ…AAIG), 99–118 (VLVI…YGLT), 128–150 (GILT…APQV), 157–179 (TAVG…TLLY), 189–211 (YGVF…APGG), 218–240 (AVIV…GVWF), 255–277 (LPIP…GIIP), 279–301 (VVAG…GLGL), and 316–338 (FVAG…YALG).

The protein belongs to the UPF0324 family.

It localises to the cell membrane. The polypeptide is UPF0324 membrane protein BA_5405/GBAA_5405/BAS5024 (Bacillus anthracis).